A 210-amino-acid polypeptide reads, in one-letter code: Putative protein-lysine deacylase ABHD14B (210 aa).

Ala-2 is modified (N-acetylalanine). At Ser-91 the chain carries Phosphoserine. Residues Ser-111, Asp-162, and His-188 each act as charge relay system in the active site.

This sequence belongs to the AB hydrolase superfamily. ABHD14 family. In terms of assembly, may interact with TAF1.

The protein localises to the cytoplasm. Its subcellular location is the nucleus. The catalysed reaction is L-lysyl-[protein] + acetyl-CoA = N(6)-acetyl-L-lysyl-[protein] + CoA + H(+). Acts as an atypical protein-lysine deacetylase in vitro. Catalyzes the deacetylation of lysine residues using CoA as substrate, generating acetyl-CoA and the free amine of protein-lysine residues. Additional experiments are however required to confirm the protein-lysine deacetylase activity in vivo. Has hydrolase activity towards various surrogate p-nitrophenyl (pNp) substrates, such as pNp-butyrate, pNp-acetate and pNp-octanoate in vitro, with a strong preference for pNp-acetate. May activate transcription. The polypeptide is Putative protein-lysine deacylase ABHD14B (Pongo abelii (Sumatran orangutan)).